The following is a 400-amino-acid chain: tRNA(Met) cytidine acetate ligase (400 aa).

ATP contacts are provided by residues 7 to 20 (IVEYNPFHNGHLYH), Gly101, Asn159, and Arg184.

It belongs to the TmcAL family.

Its subcellular location is the cytoplasm. The enzyme catalyses cytidine(34) in elongator tRNA(Met) + acetate + ATP = N(4)-acetylcytidine(34) in elongator tRNA(Met) + AMP + diphosphate. Its function is as follows. Catalyzes the formation of N(4)-acetylcytidine (ac(4)C) at the wobble position of elongator tRNA(Met), using acetate and ATP as substrates. First activates an acetate ion to form acetyladenylate (Ac-AMP) and then transfers the acetyl group to tRNA to form ac(4)C34. The polypeptide is tRNA(Met) cytidine acetate ligase (Caldicellulosiruptor saccharolyticus (strain ATCC 43494 / DSM 8903 / Tp8T 6331)).